An 820-amino-acid polypeptide reads, in one-letter code: MAPPKKRTAPKDDDFVLTLSDDENDVFSGINEDGDDHLDEETAKSTTKKRKRDTAETTQSKNKKQKQQKQSKNGKQQKKVEEAASEPEEGSEEEEDAGEDDGALNSDFEFDVGAAAQKDVVEGFDGWGLDETKDGAKKNGDKQGVDIDEIISRRQAKKEAQLKKKPKKQEVESEDEGSGNEDDASDGGMSVDFQDDELMAEDGFGMGADGEDESGQSDAQESGSEDEHAGSDSEDSDDDDDDAASDNDSVATPVQHPDDVASDNDGSDIESEVDAEEEAKRKAFFAPEEQTSEQSAAELSKKSFQEFNLSRPILRGLAAVNFTNPTPIQRKTIPVALLGKDIVGSAVTGSGKTAAFVVPILERLLFRPRKVPTSRVAILMPTRELAVQCYNVATKLATYTDITFCQLVGGFSLREQENILKKRPDVIIATPGRFIDHMRNSASFTVDTLEILVLDEADRMLEDGFADELNEILTTIPKSRQTMLFSATMTDSVDKLIRVGLNRPVRLMVDSKKNTSMNLIQEFVRLRPGREDKRLGYLLHLCKEVYTGRVIVFFRQKKEAHRVRIAFGLLGLKAAELHGSMSQEQRIRSVENFREGKVSFLLATDLAARGLDIKGVETVINYEAPQSHEIYLHRVGRTARAGRSGRACTIAAEPDRKVVKAAVKASKAQGAKVASRVVDPAVADRWAQKAKDLEEEINAVLEEEKIEKQLAQAEMQVTRSENMIKHEAEIMSRPKRTWFASEREKILSKKAGAAELNGLDSVKSKKEKVRLSNKDKKRLDDSRQRNEGNIGWKKGKVDRESQKQGKIQKGKKENKKKGKK.

Positions 1-278 (MAPPKKRTAP…IESEVDAEEE (278 aa)) are disordered. Over residues 83–102 (AASEPEEGSEEEEDAGEDDG) the composition is skewed to acidic residues. Positions 130–145 (DETKDGAKKNGDKQGV) are enriched in basic and acidic residues. 3 stretches are compositionally biased toward acidic residues: residues 172-185 (ESEDEGSGNEDDAS), 232-245 (DSEDSDDDDDDAAS), and 260-277 (VASDNDGSDIESEVDAEE). The Q motif signature appears at 302–330 (KSFQEFNLSRPILRGLAAVNFTNPTPIQR). The 175-residue stretch at 333-507 (IPVALLGKDI…RVGLNRPVRL (175 aa)) folds into the Helicase ATP-binding domain. 346–353 (AVTGSGKT) provides a ligand contact to ATP. Residues 455–458 (DEAD) carry the DEAD box motif. A Helicase C-terminal domain is found at 537 to 714 (YLLHLCKEVY…KIEKQLAQAE (178 aa)). Residues 681–729 (AVADRWAQKAKDLEEEINAVLEEEKIEKQLAQAEMQVTRSENMIKHEAE) adopt a coiled-coil conformation. Residues 759 to 820 (LDSVKSKKEK…KKENKKKGKK (62 aa)) are disordered. The segment covering 769–786 (VRLSNKDKKRLDDSRQRN) has biased composition (basic and acidic residues). Residues 806-820 (KIQKGKKENKKKGKK) show a composition bias toward basic residues.

This sequence belongs to the DEAD box helicase family. DDX27/DRS1 subfamily. Associates with pre-ribosomal particles.

It is found in the nucleus. Its subcellular location is the nucleolus. It carries out the reaction ATP + H2O = ADP + phosphate + H(+). ATP-binding RNA helicase involved in ribosome assembly. This Aspergillus oryzae (strain ATCC 42149 / RIB 40) (Yellow koji mold) protein is ATP-dependent RNA helicase drs1 (drs1).